The chain runs to 701 residues: Ribosomal RNA large subunit methyltransferase K/L (701 aa).

In terms of domain architecture, THUMP spans 43–154; that stretch reads LLYQSLMWSR…KETAHISLDL (112 aa).

The protein belongs to the methyltransferase superfamily. RlmKL family.

It is found in the cytoplasm. The enzyme catalyses guanosine(2445) in 23S rRNA + S-adenosyl-L-methionine = N(2)-methylguanosine(2445) in 23S rRNA + S-adenosyl-L-homocysteine + H(+). It carries out the reaction guanosine(2069) in 23S rRNA + S-adenosyl-L-methionine = N(2)-methylguanosine(2069) in 23S rRNA + S-adenosyl-L-homocysteine + H(+). Functionally, specifically methylates the guanine in position 2445 (m2G2445) and the guanine in position 2069 (m7G2069) of 23S rRNA. The sequence is that of Ribosomal RNA large subunit methyltransferase K/L from Klebsiella pneumoniae (strain 342).